Here is a 338-residue protein sequence, read N- to C-terminus: 1-aminocyclopropane-1-carboxylate deaminase (338 aa).

N6-(pyridoxal phosphate)lysine is present on lysine 51. Serine 78 functions as the Nucleophile in the catalytic mechanism.

Belongs to the ACC deaminase/D-cysteine desulfhydrase family. In terms of assembly, homotrimer. The cofactor is pyridoxal 5'-phosphate.

It catalyses the reaction 1-aminocyclopropane-1-carboxylate + H2O = 2-oxobutanoate + NH4(+). Its function is as follows. Catalyzes a cyclopropane ring-opening reaction, the irreversible conversion of 1-aminocyclopropane-1-carboxylate (ACC) to ammonia and alpha-ketobutyrate. Allows growth on ACC as a nitrogen source. The polypeptide is 1-aminocyclopropane-1-carboxylate deaminase (Burkholderia multivorans (strain ATCC 17616 / 249)).